Consider the following 198-residue polypeptide: Host transcription reprogramming factor 1 (198 aa).

The first 19 residues, 1–19 (MQLSNFLSIWALVAMGATA), serve as a signal peptide directing secretion. 2 disordered regions span residues 21–59 (PMPS…SYHS) and 71–198 (ERLA…PVQL). The segment at 58–81 (HSCETCAAPFRTEERLAAHRQADH) adopts a C2H2-type zinc-finger fold. Composition is skewed to basic and acidic residues over residues 71–80 (ERLAAHRQAD), 104–128 (TSER…RSQE), and 167–177 (KLDKPTRKEQY).

The protein resides in the secreted. Its subcellular location is the host nucleus. Functionally, secreted effector that translocates into the nuclei of host cells to reprogram the expression of immunity-associated genes by binding to effector binding elements (EBEs) in rice. Binds the 5'-CAATCTTC-3' EBE of promoters from targeted rice genes and probably recruits a yet to be determined host repressor. Causes ambivalent immunity with increased susceptibility to the hemibiotrophic pathogens Magnaporthe oryzae and Xanthomonas oryzae pv. oryzae, but enhances resistance to Cochliobolus miyabeanus, a necrotrophic pathogen. The polypeptide is Host transcription reprogramming factor 1 (Pyricularia oryzae (strain 70-15 / ATCC MYA-4617 / FGSC 8958) (Rice blast fungus)).